The chain runs to 683 residues: uncharacterized protein (683 aa).

2 stretches are compositionally biased toward polar residues: residues 407–420 and 512–529; these read FETS…TYTP and EGSS…SSEA. Disordered stretches follow at residues 407-427, 509-556, and 621-648; these read FETS…KLST, FSRE…SSTV, and HNTS…DHPD. The span at 531 to 542 shows a compositional bias: low complexity; it reads LPPLLTTTPTPT. 2 stretches are compositionally biased toward polar residues: residues 543 to 556 and 621 to 630; these read NTEK…SSTV and HNTSMPNPHH. A compositionally biased stretch (basic and acidic residues) spans 633–648; the sequence is VKPEDHPHHPEGDHPD. Residues 657 to 677 form a helical membrane-spanning segment; it reads IWLLPIAGTIFALVALVIVNI.

It localises to the host membrane. This is an uncharacterized protein from Alcelaphine herpesvirus 1 (strain C500) (AlHV-1).